A 430-amino-acid chain; its full sequence is Ethylene-responsive transcription factor WRI1 (430 aa).

The span at Met1 to Ser26 shows a compositional bias: low complexity. Positions Met1–Tyr66 are disordered. A compositionally biased stretch (polar residues) spans Asn53 to Ser63. The segment at residues Ile65–Pro131 is a DNA-binding region (AP2/ERF 1). Residue Thr70 is modified to Phosphothreonine; by KIN10. Phosphoserine; by KIN10 is present on Ser166. The segment at residues Lys167–Asp225 is a DNA-binding region (AP2/ERF 2). Residues Val260–Lys274 show a composition bias toward basic and acidic residues. 2 disordered regions span residues Val260–Glu297 and Ser398–Thr422.

Belongs to the AP2/ERF transcription factor family. AP2 subfamily. Interacts with KIN10 and KIN11. Post-translationally, ubiquitinated. The phosphorylation at Thr-70 and Ser-166 by KIN10 facilitates its degradation via the proteasomal pathway. Mostly expressed in siliques, especially in seeds. Also detected in roots and flowers, and, to a lower extent, in leaves stems and seedlings.

The protein localises to the nucleus. With respect to regulation, down-regulated by KIN10 that controls its protein stability under a phosphorylation-dependent manner. Functionally, may be involved in the regulation of gene expression by stress factors and by components of stress signal transduction pathways. Transcriptional activator involved in the activation of a subset of sugar-responsive genes and the control of carbon flow from sucrose import to oil accumulation in developing seeds. Binds to the GCC-box pathogenesis-related promoter element. Promotes sugar uptake and seed oil accumulation by glycolysis. Required for embryo development, seed germination and, indirectly, for seedling establishment. Negative regulator of the ABA-mediated germination inhibition. This Arabidopsis thaliana (Mouse-ear cress) protein is Ethylene-responsive transcription factor WRI1 (WRI1).